A 552-amino-acid polypeptide reads, in one-letter code: Outer dynein arm protein 1 (552 aa).

A disordered region spans residues 1-27 (MPSADATRGGGSAGSMGKGTLGAGDTL). Residues 8–22 (RGGGSAGSMGKGTLG) are compositionally biased toward gly residues. Coiled-coil stretches lie at residues 28–59 (GHKSVLDKQRAAIEKLRAQNEQLKTELLLENK), 120–260 (SAKE…QELL), and 331–395 (TLFN…YEKR). Disordered regions lie at residues 482–515 (NRIIIEPPSTTQEEEVEGLEPEPVEEDRPLTREH) and 528–552 (LETAIKVRPAGADATGGKRGSPTRR). Acidic residues predominate over residues 493-506 (QEEEVEGLEPEPVE).

It belongs to the ODA1/DCC2 family. As to quaternary structure, component of the outer dynein arm complex.

Its subcellular location is the cytoplasm. It localises to the cytoskeleton. The protein localises to the cilium axoneme. Functionally, component of the outer dynein arm complex required for assembly of the outer dynein arm-docking complex (ODA-DC) and the outer dynein arm onto the doublet microtubule. The chain is Outer dynein arm protein 1 (ODA1) from Chlamydomonas reinhardtii (Chlamydomonas smithii).